Here is a 283-residue protein sequence, read N- to C-terminus: Bifunctional protein FolD (283 aa).

Residues 165–167 (GAS) and serine 190 contribute to the NADP(+) site.

It belongs to the tetrahydrofolate dehydrogenase/cyclohydrolase family. Homodimer.

The enzyme catalyses (6R)-5,10-methylene-5,6,7,8-tetrahydrofolate + NADP(+) = (6R)-5,10-methenyltetrahydrofolate + NADPH. The catalysed reaction is (6R)-5,10-methenyltetrahydrofolate + H2O = (6R)-10-formyltetrahydrofolate + H(+). It participates in one-carbon metabolism; tetrahydrofolate interconversion. In terms of biological role, catalyzes the oxidation of 5,10-methylenetetrahydrofolate to 5,10-methenyltetrahydrofolate and then the hydrolysis of 5,10-methenyltetrahydrofolate to 10-formyltetrahydrofolate. This Cupriavidus necator (strain ATCC 17699 / DSM 428 / KCTC 22496 / NCIMB 10442 / H16 / Stanier 337) (Ralstonia eutropha) protein is Bifunctional protein FolD.